The sequence spans 472 residues: Chromosomal replication initiator protein DnaA (472 aa).

The interval 1 to 73 is domain I, interacts with DnaA modulators; that stretch reads MSNMEHDRWS…LTCWQAEMPE (73 aa). A domain II region spans residues 73-128; that stretch reads EVCRIDLTVRSPMRAAVTKEAPAPAEHRRDEHRPAADARSHAAAPAPSNHDALGGS. The tract at residues 89–127 is disordered; that stretch reads VTKEAPAPAEHRRDEHRPAADARSHAAAPAPSNHDALGG. The span at 97-112 shows a compositional bias: basic and acidic residues; sequence AEHRRDEHRPAADARS. The span at 113–124 shows a compositional bias: low complexity; sequence HAAAPAPSNHDA. Positions 129–351 are domain III, AAA+ region; that stretch reads PLDPRLTFAS…GAINRLLAHS (223 aa). G176, G178, K179, and T180 together coordinate ATP. The segment at 352-472 is domain IV, binds dsDNA; sequence KLNAQPVTLE…VESLKRQLQE (121 aa).

It belongs to the DnaA family. Oligomerizes as a right-handed, spiral filament on DNA at oriC.

Its subcellular location is the cytoplasm. Functionally, plays an essential role in the initiation and regulation of chromosomal replication. ATP-DnaA binds to the origin of replication (oriC) to initiate formation of the DNA replication initiation complex once per cell cycle. Binds the DnaA box (a 9 base pair repeat at the origin) and separates the double-stranded (ds)DNA. Forms a right-handed helical filament on oriC DNA; dsDNA binds to the exterior of the filament while single-stranded (ss)DNA is stabiized in the filament's interior. The ATP-DnaA-oriC complex binds and stabilizes one strand of the AT-rich DNA unwinding element (DUE), permitting loading of DNA polymerase. After initiation quickly degrades to an ADP-DnaA complex that is not apt for DNA replication. Binds acidic phospholipids. The chain is Chromosomal replication initiator protein DnaA from Rhodopseudomonas palustris (strain BisB5).